Here is a 235-residue protein sequence, read N- to C-terminus: Riboflavin kinase (235 aa).

Mg(2+) contacts are provided by Thr45 and Asn47. Residue Glu140 is the Nucleophile of the active site.

Belongs to the flavokinase family. It depends on Zn(2+) as a cofactor. Mg(2+) is required as a cofactor.

The catalysed reaction is riboflavin + ATP = FMN + ADP + H(+). It participates in cofactor biosynthesis; FMN biosynthesis; FMN from riboflavin (ATP route): step 1/1. Catalyzes the phosphorylation of riboflavin (vitamin B2) to form flavin mononucleotide (FMN) coenzyme. The sequence is that of Riboflavin kinase (FMN1) from Chaetomium globosum (strain ATCC 6205 / CBS 148.51 / DSM 1962 / NBRC 6347 / NRRL 1970) (Soil fungus).